The following is a 215-amino-acid chain: MRVILLGAPGAGKGTQAKFITEKFGIPQVSTGDMLRAAVKAETELGLKAKSVMDSGGLVSDDLIIGLIKDRLAEPDCANGVLFDGFPRTIPQAEALLNAGLEIDHVLEIAVDDEEIVKRMSGRRVHEGSGRIYHTIFNPPKVEGIDDVTGEPLLQRKDDVEETVRHRLSVYHAQTKPLVEFYSKLEAKNGKPKCSHIPGVGSVEDITAKVLKALS.

10-15 (GAGKGT) is an ATP binding site. Residues 30–59 (STGDMLRAAVKAETELGLKAKSVMDSGGLV) are NMP. AMP contacts are provided by residues T31, R36, 57–59 (GLV), 85–88 (GFPR), and Q92. The segment at 122-159 (GRRVHEGSGRIYHTIFNPPKVEGIDDVTGEPLLQRKDD) is LID. Residues R123 and 132–133 (IY) contribute to the ATP site. Positions 156 and 167 each coordinate AMP. Position 201 (G201) interacts with ATP.

This sequence belongs to the adenylate kinase family. In terms of assembly, monomer.

Its subcellular location is the cytoplasm. The catalysed reaction is AMP + ATP = 2 ADP. The protein operates within purine metabolism; AMP biosynthesis via salvage pathway; AMP from ADP: step 1/1. In terms of biological role, catalyzes the reversible transfer of the terminal phosphate group between ATP and AMP. Plays an important role in cellular energy homeostasis and in adenine nucleotide metabolism. In Pseudomonas syringae pv. syringae (strain B728a), this protein is Adenylate kinase.